The sequence spans 356 residues: Tyrosine recombinase XerS (356 aa).

The Core-binding (CB) domain maps to 16–121; the sequence is LMPWFVLEYY…ALSCLYKYLT (106 aa). Residues 169–354 form the Tyr recombinase domain; it reads KFLDYVENEY…VNDEQKNALD (186 aa). Catalysis depends on residues Arg-210, Lys-234, His-306, Arg-309, and His-332. Tyr-341 (O-(3'-phospho-DNA)-tyrosine intermediate) is an active-site residue.

This sequence belongs to the 'phage' integrase family. XerS subfamily.

It is found in the cytoplasm. With respect to regulation, ftsK is required for recombination. Site-specific tyrosine recombinase, which acts by catalyzing the cutting and rejoining of the recombining DNA molecules. Essential to convert dimers of the bacterial chromosome into monomers to permit their segregation at cell division. This chain is Tyrosine recombinase XerS, found in Streptococcus thermophilus (strain ATCC BAA-250 / LMG 18311).